We begin with the raw amino-acid sequence, 633 residues long: Phosphomethylpyrimidine synthase (633 aa).

Substrate-binding positions include Asn245, Met274, Tyr303, His339, 359 to 361 (SRG), 400 to 403 (DGLR), and Glu439. His443 lines the Zn(2+) pocket. Tyr466 provides a ligand contact to substrate. Position 507 (His507) interacts with Zn(2+). Cys587, Cys590, and Cys595 together coordinate [4Fe-4S] cluster.

Belongs to the ThiC family. As to quaternary structure, homodimer. The cofactor is [4Fe-4S] cluster.

The catalysed reaction is 5-amino-1-(5-phospho-beta-D-ribosyl)imidazole + S-adenosyl-L-methionine = 4-amino-2-methyl-5-(phosphooxymethyl)pyrimidine + CO + 5'-deoxyadenosine + formate + L-methionine + 3 H(+). It functions in the pathway cofactor biosynthesis; thiamine diphosphate biosynthesis. Catalyzes the synthesis of the hydroxymethylpyrimidine phosphate (HMP-P) moiety of thiamine from aminoimidazole ribotide (AIR) in a radical S-adenosyl-L-methionine (SAM)-dependent reaction. This is Phosphomethylpyrimidine synthase from Neisseria meningitidis serogroup A / serotype 4A (strain DSM 15465 / Z2491).